A 335-amino-acid polypeptide reads, in one-letter code: Putative peroxisomal biogenesis factor 19 (335 aa).

Disordered stretches follow at residues 14 to 70 (LETQ…LGND) and 104 to 124 (YNKD…PSEE). Composition is skewed to low complexity over residues 22 to 55 (PTTT…PSTI) and 109 to 119 (NNNSDDSNNGG).

This sequence belongs to the peroxin-19 family.

The protein resides in the peroxisome. The protein is Putative peroxisomal biogenesis factor 19 (pex19) of Dictyostelium discoideum (Social amoeba).